Reading from the N-terminus, the 567-residue chain is MSCARITVTLPYRSAKTSIQRGITHYPALIRPRFSACTPLASAMPLSSTPLINGDNSQRKNTRQHMEESSSKRREYLLEETTRKLQRNDTESVEKLKLIDNIQQLGIGYYFEDAINAVLRSPFSTGEEDLFTAALRFRLLRHNGIEISPEIFLKFKDERGKFDESDTLGLLSLYEASNLGVAGEEILEEAMEFAEARLRRSLSEPAAPLHGEVAQALDVPRHLRMARLEARRFIEQYGKQSDHDGDLLELAILDYNQVQAQHQSELTEIIRWWKELGLVDKLSFGRDRPLECFLWTVGLLPEPKYSSVRIELAKAISILLVIDDIFDTYGEMDDLILFTDAIRRWDLEAMEGLPEYMKICYMALYNTTNEVCYKVLRDTGRIVLLNLKSTWIDMIEGFMEEAKWFNGGSAPKLEEYIENGVSTAGAYMAFAHIFFLIGEGVTHQNSQLFTQKPYPKVFSAAGRILRLWDDLGTAKEEQERGDLASCVQLFMKEKSLTEEEARSRILEEIKGLWRDLNGELVYNKNLPLSIIKVALNMARASQVVYKHDQDTYFSSVDNYVDALFFTQ.

The transit peptide at 1 to 63 directs the protein to the chloroplast; sequence MSCARITVTL…GDNSQRKNTR (63 aa). A disordered region spans residues 48 to 75; the sequence is STPLINGDNSQRKNTRQHMEESSSKRRE. The segment covering 64-75 has biased composition (basic and acidic residues); that stretch reads QHMEESSSKRRE. Residues Arg-286, Asp-323, Asp-327, Arg-466, and Asp-469 each contribute to the (2E)-geranyl diphosphate site. Residues Asp-323 and Asp-327 each contribute to the Mn(2+) site. The DDXXD motif motif lies at 323 to 327; it reads DDIFD. Residues Asp-469, Thr-473, and Glu-477 each contribute to the Mn(2+) site.

The protein belongs to the terpene synthase family. Tpsb subfamily. Homodimer. The cofactor is Mn(2+). Expressed in the peltate glandular trichomes of the leaves.

It is found in the plastid. Its subcellular location is the chloroplast. It catalyses the reaction (2E)-geranyl diphosphate + H2O = (2E)-geraniol + diphosphate. Its pathway is secondary metabolite biosynthesis; terpenoid biosynthesis. In terms of biological role, monoterpene synthase that catalyzes the formation of geraniol from geranyl diphosphate. The protein is Geraniol synthase, chloroplastic (GES) of Ocimum basilicum (Sweet basil).